Reading from the N-terminus, the 87-residue chain is CRISPR-associated endoribonuclease Cas2 (87 aa).

Residue D8 coordinates Mg(2+).

This sequence belongs to the CRISPR-associated endoribonuclease Cas2 protein family. In terms of assembly, homodimer, forms a heterotetramer with a Cas1 homodimer. Mg(2+) serves as cofactor.

Functionally, CRISPR (clustered regularly interspaced short palindromic repeat), is an adaptive immune system that provides protection against mobile genetic elements (viruses, transposable elements and conjugative plasmids). CRISPR clusters contain sequences complementary to antecedent mobile elements and target invading nucleic acids. CRISPR clusters are transcribed and processed into CRISPR RNA (crRNA). Functions as a ssRNA-specific endoribonuclease. Involved in the integration of spacer DNA into the CRISPR cassette. This chain is CRISPR-associated endoribonuclease Cas2, found in Dictyoglomus turgidum (strain DSM 6724 / Z-1310).